The sequence spans 219 residues: Proteasome subunit beta type-9 (219 aa).

The propeptide at 1 to 20 is removed in mature form; that stretch reads MLRTGAPNGDLPRAGEVHTG. The active-site Nucleophile is T21. Residues K53 and K109 each carry the N6-acetyllysine modification.

It belongs to the peptidase T1B family. As to quaternary structure, the 26S proteasome consists of a 20S proteasome core and two 19S regulatory subunits. The 20S proteasome core is composed of 28 subunits that are arranged in four stacked rings, resulting in a barrel-shaped structure. The two end rings are each formed by seven alpha subunits, and the two central rings are each formed by seven beta subunits. The catalytic chamber with the active sites is on the inside of the barrel. Component of the immunoproteasome, where it displaces the equivalent housekeeping subunit PSMB6. Component of the spermatoproteasome, a form of the proteasome specifically found in testis. Post-translationally, autocleaved. The resulting N-terminal Thr residue of the mature subunit is responsible for the nucleophile proteolytic activity.

Its subcellular location is the cytoplasm. The protein localises to the nucleus. It carries out the reaction Cleavage of peptide bonds with very broad specificity.. Functionally, the proteasome is a multicatalytic proteinase complex which is characterized by its ability to cleave peptides with Arg, Phe, Tyr, Leu, and Glu adjacent to the leaving group at neutral or slightly basic pH. The proteasome has an ATP-dependent proteolytic activity. This subunit is involved in antigen processing to generate class I binding peptides. This chain is Proteasome subunit beta type-9 (PSMB9), found in Bos taurus (Bovine).